Reading from the N-terminus, the 156-residue chain is Snaclec 2 (156 aa).

Residues 1–21 (MGRFIFLSSGLLVVFLSLSGA) form the signal peptide. Disulfide bonds link C25–C36, C53–C150, and C125–C142. Positions 32–151 (FDQHCYRAFD…CGDDYPFVCK (120 aa)) constitute a C-type lectin domain.

It belongs to the snaclec family. As to quaternary structure, heterodimer; disulfide-linked. Expressed by the venom gland.

Its subcellular location is the secreted. Its function is as follows. Interferes with one step of hemostasis (modulation of platelet aggregation, or coagulation cascade, for example). The protein is Snaclec 2 of Bitis gabonica (Gaboon adder).